The sequence spans 267 residues: MINLTPTELERYSRQMMLPNFGEAAQKRLKSATVLVTGVGGLGGTAALYLAVAGVGRLILVRGGDLRLDDMNRQVLMTDDWVGKPRVFKAKETLQAINPDIQIETIHDYVTSDNVDSLVQSADMALDCAHNFTERDLLNSACVRWRKPMVEAAMDGMEAYLTTIIPGVTPCLSCIFPEKPEWDRRGFSVLGAVSGTLACLTALEAIKLITGFSQPLLSQLLTIDLNRMEFAKRRLYRDRSCPVCGNDAPWRYAQSNSMETSSNCTHS.

Belongs to the HesA/MoeB/ThiF family.

This chain is Protein HesA, heterocyst (hesA1), found in Trichormus variabilis (strain ATCC 29413 / PCC 7937) (Anabaena variabilis).